The following is a 243-amino-acid chain: Pleckstrin homology domain-containing family B member 1 (243 aa).

The PH domain occupies 21–128; the sequence is ALVRGGWLWR…WKTALLEANS (108 aa).

In terms of assembly, homodimer. Interacts (via PH domain) with MYO1C. Interacts (via PH domain) with MYO7A. Binds transducins. In terms of tissue distribution, highly expressed in retina and brain. Levels are very low or not detectable in all other tissues tested.

The protein resides in the membrane. It localises to the cytoplasm. The protein is Pleckstrin homology domain-containing family B member 1 (PLEKHB1) of Homo sapiens (Human).